We begin with the raw amino-acid sequence, 298 residues long: MIKVRVPATSANMGPGFDSIGMAVTLYNEFAFKEINTGLKFNGIPEEFCNEDNIIYEAMKYCFDKADYKFKGLEISVLKQDIPISRGLGSSSSCIVGGLIGANEILGGKFSKDELLEMAVEIEGHPDNVAPALFGGIVVAIIENNKTVYNKIDIKNKVKFITIVPDFRLSTEKARQVLPKQISRADGIYNIGRAALMISCFLTDRYDLIRSACNDALHQNYRKELIPHFDDVYNKCYELGALGCYLSGAGPTIMAIIDNGAESFSNNIKQYLKDKDIKWRVLELQADNKGAVLIKGDC.

83 to 93 lines the ATP pocket; that stretch reads PISRGLGSSSS.

This sequence belongs to the GHMP kinase family. Homoserine kinase subfamily.

The protein resides in the cytoplasm. It carries out the reaction L-homoserine + ATP = O-phospho-L-homoserine + ADP + H(+). It functions in the pathway amino-acid biosynthesis; L-threonine biosynthesis; L-threonine from L-aspartate: step 4/5. In terms of biological role, catalyzes the ATP-dependent phosphorylation of L-homoserine to L-homoserine phosphate. This chain is Homoserine kinase, found in Clostridium botulinum (strain Alaska E43 / Type E3).